The following is a 309-amino-acid chain: Malate dehydrogenase (309 aa).

NAD(+)-binding positions include 9-14 and Asp-33; that span reads GAGFVG. Residues Arg-82 and Arg-88 each contribute to the substrate site. Residues Asn-95 and 118–120 contribute to the NAD(+) site; that span reads VNN. Residues Asn-120 and Arg-151 each contribute to the substrate site. The Proton acceptor role is filled by His-175.

The protein belongs to the LDH/MDH superfamily. MDH type 3 family.

It catalyses the reaction (S)-malate + NAD(+) = oxaloacetate + NADH + H(+). Its function is as follows. Catalyzes the reversible oxidation of malate to oxaloacetate. The protein is Malate dehydrogenase of Chloroflexus aggregans (strain MD-66 / DSM 9485).